The chain runs to 790 residues: Mitochondrial intermediate peptidase (790 aa).

A mitochondrion-targeting transit peptide spans 1-29; that stretch reads MLKRLARNNSSPWICSRCLQQSQRQRRFN. A Zn(2+)-binding site is contributed by His-570. Glu-571 is a catalytic residue. Zn(2+) is bound by residues His-574 and His-577.

The protein belongs to the peptidase M3 family. It depends on Zn(2+) as a cofactor.

The protein resides in the mitochondrion matrix. It catalyses the reaction Release of an N-terminal octapeptide as second stage of processing of some proteins imported into the mitochondrion.. In terms of biological role, cleaves proteins, imported into the mitochondrion, to their mature size. While most mitochondrial precursor proteins are processed to the mature form in one step by mitochondrial processing peptidase (MPP), the sequential cleavage by MIP of an octapeptide after initial processing by MPP is a required step for a subgroup of nuclear-encoded precursor proteins destined for the matrix or the inner membrane. This Phaeosphaeria nodorum (strain SN15 / ATCC MYA-4574 / FGSC 10173) (Glume blotch fungus) protein is Mitochondrial intermediate peptidase (OCT1).